The following is a 123-amino-acid chain: Diacylglycerol kinase (123 aa).

A helical transmembrane segment spans residues 15-32; it reads ILNATGYSLAGFLAAFRG. A divalent metal cation is bound at residue E33. Transmembrane regions (helical) follow at residues 35–55, 61–81, and 102–122; these read AFRQ…LLDV, ALMI…SAIE, and GSAA…TILL. Residue E74 is the Proton acceptor of the active site. Residue E81 coordinates a divalent metal cation.

Belongs to the bacterial diacylglycerol kinase family. The cofactor is Mg(2+).

It is found in the cell inner membrane. It carries out the reaction a 1,2-diacyl-sn-glycerol + ATP = a 1,2-diacyl-sn-glycero-3-phosphate + ADP + H(+). Its function is as follows. Catalyzes the ATP-dependent phosphorylation of sn-l,2-diacylglycerol (DAG) to phosphatidic acid. Involved in the recycling of diacylglycerol produced as a by-product during membrane-derived oligosaccharide (MDO) biosynthesis. The polypeptide is Diacylglycerol kinase (dgkA) (Pseudomonas aeruginosa (strain ATCC 15692 / DSM 22644 / CIP 104116 / JCM 14847 / LMG 12228 / 1C / PRS 101 / PAO1)).